Here is a 537-residue protein sequence, read N- to C-terminus: Pancreatic secretory granule membrane major glycoprotein GP2 (537 aa).

Residues 1-28 (MPHLMERMVGSGLLWLALVSCILTQASA) form the signal peptide. The beta hairpin stretch occupies residues 41–60 (SYGLDLDCGAPGTPEAHVCF). Disulfide bonds link Cys48–Cys59, Cys63–Cys157, Cys85–Cys172, Cys107–Cys145, Cys113–Cys177, Cys138–Cys146, Cys190–Cys200, Cys194–Cys209, Cys211–Cys241, Cys229–Cys320, and Cys261–Cys284. The interval 61–81 (DPCQNYTLLDEPFRSTENSAG) is D10C. Residue Asn65 is glycosylated (N-linked (GlcNAc...) (high mannose) asparagine). N-linked (GlcNAc...) asparagine glycans are attached at residues Asn88, Asn122, and Asn134. The EGF-like domain maps to 186–230 (VEDKCEKACRPEEECLALNSTWGCFCRQDLNSSDVHSLQPQLDCG). 3 N-linked (GlcNAc...) asparagine glycosylation sites follow: Asn204, Asn216, and Asn260. Residues 228–321 (DCGPREIKVK…TILNINFQCA (94 aa)) are ZP-N. A ZP domain is found at 228 to 484 (DCGPREIKVK…PSCSRSQVRS (257 aa)). 2 N-linked (GlcNAc...) asparagine glycosylation sites follow: Asn291 and Asn342. The interval 322–345 (YPLDMKVSLQAALQPIVSSLNVSV) is flexible ZP-N/ZP-C linker. Residues 346–357 (DGNGEFIVRMAL) form an internal hydrophobic patch (IHP) region. Positions 346-484 (DGNGEFIVRM…PSCSRSQVRS (139 aa)) are ZP-C. A glycan (N-linked (GlcNAc...) asparagine) is linked at Asn362. 3 disulfide bridges follow: Cys401–Cys461, Cys422–Cys477, and Cys466–Cys473. An external hydrophobic patch (EHP) region spans residues 491–499 (LARVLDLGP). A lipid anchor (GPI-anchor amidated asparagine) is attached at Asn512. The propeptide at 513–537 (GTPSTAGFLVAWPMVLLTVLLAWLF) is removed in mature form.

In terms of assembly, interacts with SYCN. Interacts with bacterial adhesin fimH. In terms of processing, N-glycosylated. Glycosylated Asn-65 may be required for interaction with bacterial adhesin fimH. Expressed in pancreas (at protein level). Specifically expressed by M (microfold) cells which are atypical epithelial cells of the intestine (at protein level).

It is found in the zymogen granule membrane. The protein resides in the secreted. Its subcellular location is the cell membrane. The protein localises to the apical cell membrane. It localises to the membrane raft. It is found in the endosome. Functions as an intestinal M-cell transcytotic receptor specific for type-I-piliated bacteria that participates in the mucosal immune response toward these bacteria. At the apical membrane of M-cells it binds fimH, a protein of the bacteria type I pilus tip. Internalizes bound bacteria, like E.coli and S.typhimurium, from the lumen of the intestine and delivers them, through M-cells, to the underlying organized lymphoid follicles where they are captured by antigen-presenting dendritic cells to elicit a mucosal immune response. In Homo sapiens (Human), this protein is Pancreatic secretory granule membrane major glycoprotein GP2.